The following is a 342-amino-acid chain: N-acetyl-gamma-glutamyl-phosphate reductase (342 aa).

Cys-149 is a catalytic residue.

The protein belongs to the NAGSA dehydrogenase family. Type 1 subfamily.

It is found in the cytoplasm. The enzyme catalyses N-acetyl-L-glutamate 5-semialdehyde + phosphate + NADP(+) = N-acetyl-L-glutamyl 5-phosphate + NADPH + H(+). It participates in amino-acid biosynthesis; L-arginine biosynthesis; N(2)-acetyl-L-ornithine from L-glutamate: step 3/4. In terms of biological role, catalyzes the NADPH-dependent reduction of N-acetyl-5-glutamyl phosphate to yield N-acetyl-L-glutamate 5-semialdehyde. This Roseobacter denitrificans (strain ATCC 33942 / OCh 114) (Erythrobacter sp. (strain OCh 114)) protein is N-acetyl-gamma-glutamyl-phosphate reductase.